Here is a 385-residue protein sequence, read N- to C-terminus: Lipid-A-disaccharide synthase (385 aa).

It belongs to the LpxB family.

The enzyme catalyses 2-N,3-O-bis[(3R)-3-hydroxytetradecanoyl]-alpha-D-glucosaminyl 1-phosphate + UDP-2-N,3-O-bis[(3R)-3-hydroxytetradecanoyl]-alpha-D-glucosamine = lipid A disaccharide (E. coli) + UDP + H(+). It carries out the reaction a lipid X + a UDP-2-N,3-O-bis[(3R)-3-hydroxyacyl]-alpha-D-glucosamine = a lipid A disaccharide + UDP + H(+). Its pathway is glycolipid biosynthesis; lipid IV(A) biosynthesis; lipid IV(A) from (3R)-3-hydroxytetradecanoyl-[acyl-carrier-protein] and UDP-N-acetyl-alpha-D-glucosamine: step 5/6. Condensation of UDP-2,3-diacylglucosamine and 2,3-diacylglucosamine-1-phosphate to form lipid A disaccharide, a precursor of lipid A, a phosphorylated glycolipid that anchors the lipopolysaccharide to the outer membrane of the cell. The sequence is that of Lipid-A-disaccharide synthase from Wigglesworthia glossinidia brevipalpis.